A 229-amino-acid chain; its full sequence is Ribonuclease T (229 aa).

Residues 23 to 197 (VIIDVETAGF…YDTERTAKLF (175 aa)) form the Exonuclease domain. Mg(2+) contacts are provided by Asp-26, Glu-28, His-184, and Asp-189. His-184 (proton donor/acceptor) is an active-site residue.

Belongs to the RNase T family. Homodimer. The cofactor is Mg(2+).

Trims short 3' overhangs of a variety of RNA species, leaving a one or two nucleotide 3' overhang. Responsible for the end-turnover of tRNA: specifically removes the terminal AMP residue from uncharged tRNA (tRNA-C-C-A). Also appears to be involved in tRNA biosynthesis. This Haemophilus influenzae (strain PittGG) protein is Ribonuclease T.